A 201-amino-acid polypeptide reads, in one-letter code: Flavin prenyltransferase UbiX (201 aa).

Residues 23–25, Ser49, 103–106, and Arg138 each bind FMN; these read GAS and SIKT. Dimethylallyl phosphate is bound by residues Tyr168 and Lys184.

The protein belongs to the UbiX/PAD1 family.

The enzyme catalyses dimethylallyl phosphate + FMNH2 = prenylated FMNH2 + phosphate. Functionally, flavin prenyltransferase that catalyzes the synthesis of the prenylated FMN cofactor (prenyl-FMN) for 4-hydroxy-3-polyprenylbenzoic acid decarboxylase UbiD. The prenyltransferase is metal-independent and links a dimethylallyl moiety from dimethylallyl monophosphate (DMAP) to the flavin N5 and C6 atoms of FMN. This chain is Flavin prenyltransferase UbiX, found in Saccharolobus solfataricus (strain ATCC 35092 / DSM 1617 / JCM 11322 / P2) (Sulfolobus solfataricus).